The primary structure comprises 214 residues: Large ribosomal subunit protein uL1 (214 aa).

The protein belongs to the universal ribosomal protein uL1 family. In terms of assembly, part of the 50S ribosomal subunit.

Functionally, binds directly to 23S rRNA. Probably involved in E site tRNA release. In terms of biological role, protein L1 is also a translational repressor protein, it controls the translation of its operon by binding to its mRNA. The sequence is that of Large ribosomal subunit protein uL1 from Methanoregula boonei (strain DSM 21154 / JCM 14090 / 6A8).